A 336-amino-acid polypeptide reads, in one-letter code: Opsin-1, short-wave-sensitive 1 (336 aa).

Residues 1–29 (MDAWAVQFGNASKVSPFEGEQYHIAPKWA) lie on the Extracellular side of the membrane. Asn-10 carries an N-linked (GlcNAc...) asparagine glycan. The chain crosses the membrane as a helical span at residues 30–54 (FYLQAAFMGFVFIVGTPMNGIVLFV). The Cytoplasmic portion of the chain corresponds to 55 to 66 (TMKYKKLRQPLN). Residues 67 to 91 (YILVNISLAGFIFDTFSVSQVFVCA) traverse the membrane as a helical segment. At 92–106 (ARGYYFLGYTLCAME) the chain is on the extracellular side. Cysteines 103 and 180 form a disulfide. Residues 107–126 (AAMGSIAGLVTGWSLAVLAF) form a helical membrane-spanning segment. Residues 127-145 (ERYVVICKPFGSFKFGQGQ) lie on the Cytoplasmic side of the membrane. The helical transmembrane segment at 146–169 (AVGAVVFTWIIGTACATPPFFGWS) threads the bilayer. Residues 170-195 (RYIPEGLGTACGPDWYTKSEEYNSES) lie on the Extracellular side of the membrane. The chain crosses the membrane as a helical span at residues 196–223 (YTYFLLITCFMMPMTIIIFSYSQLLGAL). The Cytoplasmic portion of the chain corresponds to 224-245 (RAVAAQQAESESTQKAEREVSR). The helical transmembrane segment at 246-269 (MVVVMVGSFVLCYAPYAVTAMYFA) threads the bilayer. Topologically, residues 270–277 (NSDEPNKD) are extracellular. A helical membrane pass occupies residues 278-302 (YRLVAIPAFFSKSSCVYNPLIYAFM). An N6-(retinylidene)lysine modification is found at Lys-289. Over 303–336 (NKQFNACIMETVFGKKIDESSEVSSKTETSSVSA) the chain is Cytoplasmic.

It belongs to the G-protein coupled receptor 1 family. Opsin subfamily. Post-translationally, phosphorylated on some or all of the serine and threonine residues present in the C-terminal region. In terms of tissue distribution, retinal short single cones, outer and inner segments.

Its subcellular location is the membrane. Its function is as follows. Visual pigments are the light-absorbing molecules that mediate vision. They consist of an apoprotein, opsin, covalently linked to cis-retinal. This chain is Opsin-1, short-wave-sensitive 1 (opn1sw1), found in Danio rerio (Zebrafish).